A 473-amino-acid polypeptide reads, in one-letter code: Pre-mRNA-splicing factor PRP46 (473 aa).

The segment covering M1–G14 has biased composition (polar residues). Disordered stretches follow at residues M1–G21 and G103–A126. 7 WD repeats span residues G180–S219, G222–H261, G264–T303, G306–T347, H349–N388, G391–H429, and D440–A473.

Belongs to the WD repeat PRL1/PRL2 family. In terms of assembly, associated with the spliceosome.

It localises to the cytoplasm. The protein localises to the nucleus. Functionally, involved in pre-mRNA splicing and required for cell cycle progression at G2/M. This is Pre-mRNA-splicing factor PRP46 (PRP46) from Cryptococcus neoformans var. neoformans serotype D (strain B-3501A) (Filobasidiella neoformans).